We begin with the raw amino-acid sequence, 367 residues long: Probable butyrate kinase (367 aa).

This sequence belongs to the acetokinase family.

It is found in the cytoplasm. It carries out the reaction butanoate + ATP = butanoyl phosphate + ADP. This chain is Probable butyrate kinase, found in Bacillus cereus (strain B4264).